A 318-amino-acid polypeptide reads, in one-letter code: Endochitinase 3 (318 aa).

Residues 1-18 (EFTIFSLLFSLLLLNASA) form the signal peptide. The Chitin-binding type-1 domain maps to 19 to 60 (EQCGSQAGGALCAPGLCCSKFGWCGNTNDYCGPGNCQSQCPG). 7 disulfides stabilise this stretch: Cys-21-Cys-36, Cys-30-Cys-42, Cys-35-Cys-49, Cys-54-Cys-58, Cys-89-Cys-152, Cys-164-Cys-172, and Cys-271-Cys-303. The Proton donor role is filled by Glu-134. A propeptide spans 312–318 (GLLVDTV) (removed in mature form, vacuolar targeting).

The protein belongs to the glycosyl hydrolase 19 family. Chitinase class I subfamily.

Its subcellular location is the vacuole. The enzyme catalyses Random endo-hydrolysis of N-acetyl-beta-D-glucosaminide (1-&gt;4)-beta-linkages in chitin and chitodextrins.. Defense against chitin-containing fungal pathogens. This chain is Endochitinase 3 (CHTB3), found in Solanum tuberosum (Potato).